The following is a 271-amino-acid chain: DNA-binding protein HEXBP (271 aa).

Basic and acidic residues-rich tracts occupy residues 1-12 and 21-42; these read MSETEDVKRPRT and CGKEGHYARECPEADSKGDERS. The tract at residues 1 to 42 is disordered; the sequence is MSETEDVKRPRTESSTSCRNCGKEGHYARECPEADSKGDERS. CCHC-type zinc fingers lie at residues 16–33, 43–60, 70–87, and 97–114; these read TSCRNCGKEGHYARECPE, TTCFRCGEEGHMSRECPN, MTCFRCGEAGHMSRDCPN, and FECYKCGQEGHLSRDCPS. The interval 107-136 is disordered; the sequence is HLSRDCPSSQGGSRGGYGQKRGRSGAQGGY. Over residues 118-136 the composition is skewed to gly residues; that stretch reads GSRGGYGQKRGRSGAQGGY. 5 CCHC-type zinc fingers span residues 140 to 157, 168 to 185, 196 to 213, 222 to 239, and 253 to 270; these read RTCYKCGDAGHISRDCPN, RKCYKCGESGHMSRECPS, RACYKCGKPGHISRECPE, and RTCYKCGEAGHISRDCPS.

The protein resides in the nucleus. Binds to single-stranded DNA located in the 5' hexanucleotide repeat region of the L.major leishmanolysin (GP63) gene. This is DNA-binding protein HEXBP (HEXBP) from Leishmania major.